The primary structure comprises 245 residues: tRNA (guanine-N(1)-)-methyltransferase (245 aa).

An S-adenosyl-L-methionine-binding site is contributed by glycine 114.

Belongs to the RNA methyltransferase TrmD family. In terms of assembly, homodimer.

It is found in the cytoplasm. The catalysed reaction is guanosine(37) in tRNA + S-adenosyl-L-methionine = N(1)-methylguanosine(37) in tRNA + S-adenosyl-L-homocysteine + H(+). Specifically methylates guanosine-37 in various tRNAs. The polypeptide is tRNA (guanine-N(1)-)-methyltransferase (Sphingopyxis alaskensis (strain DSM 13593 / LMG 18877 / RB2256) (Sphingomonas alaskensis)).